A 518-amino-acid chain; its full sequence is MSEALTEQKSQKWAISLFTIGVFMAALDNGIISAALTTINESFSVSPSWGSWGITLYTLGLSVSVPIVGKLSDRYGRKKLFLIEVCLFGLGSLLVALSQSFPLFLISRLIQALGGGGIFIIGSSHILATLPKEKQGKALGLLGAMNGMAAVLGPNIGSFLLDWTGSWHWLFLINLPIAVLLVVFGACFIAETKAPEAKRLDAAGIFLLSLSILAVMYGMTNLDGANLLHSLGNPEVYGCIIFGILCFAALISYEKRVEMRGGDPILAYSLLRNHMFQRTLIIGLLSGGLLAAVIFIPSYVEQYLGVPAAKAGYWMTPLALASGIGAWLGGALTDKKGPVKTVILSGIISCAGFALFPLWVTEKWEFVIASVAAGIGFGFLLGAPLNVLVSEAAKTNKGTALGTLSLVRQIGLTLAPTLYAGFITAGFDQIGDEINSRLSDSGYSEKAMQMIPEIDSSEVSSLQEQIERIPVPEVKTAISDAIHASVASGYDHLYAAAAVVSLLVIAAISIPAFRRQKR.

14 consecutive transmembrane segments (helical) span residues 13–33 (WAISLFTIGVFMAALDNGIIS), 49–69 (WGSWGITLYTLGLSVSVPIVG), 86–106 (CLFGLGSLLVALSQSFPLFLI), 109–129 (LIQALGGGGIFIIGSSHILAT), 141–161 (LLGAMNGMAAVLGPNIGSFLL), 169–189 (WLFLINLPIAVLLVVFGACFI), 202–222 (AAGIFLLSLSILAVMYGMTNL), 231–251 (LGNPEVYGCIIFGILCFAALI), 280–300 (LIIGLLSGGLLAAVIFIPSYV), 312–332 (GYWMTPLALASGIGAWLGGAL), 341–361 (TVILSGIISCAGFALFPLWVT), 365–385 (EFVIASVAAGIGFGFLLGAPL), 410–430 (IGLTLAPTLYAGFITAGFDQI), and 493–513 (LYAAAAVVSLLVIAAISIPAF).

It belongs to the major facilitator superfamily. TCR/Tet family.

It localises to the cell membrane. This is an uncharacterized protein from Bacillus subtilis (strain 168).